Consider the following 721-residue polypeptide: Phosphoribosylformylglycinamidine synthase subunit PurL (721 aa).

His47 is a catalytic residue. ATP-binding residues include Tyr50 and Lys89. A Mg(2+)-binding site is contributed by Glu91. Substrate-binding positions include 92–95 (SHNH) and Arg114. The active-site Proton acceptor is the His93. Asp115 contributes to the Mg(2+) binding site. Gln238 provides a ligand contact to substrate. Asp266 contacts Mg(2+). Position 310–312 (310–312 (ESQ)) interacts with substrate. The ATP site is built by Asp490 and Gly527. Asn528 provides a ligand contact to Mg(2+). Residue Ser530 coordinates substrate.

The protein belongs to the FGAMS family. As to quaternary structure, monomer. Part of the FGAM synthase complex composed of 1 PurL, 1 PurQ and 2 PurS subunits.

The protein localises to the cytoplasm. It catalyses the reaction N(2)-formyl-N(1)-(5-phospho-beta-D-ribosyl)glycinamide + L-glutamine + ATP + H2O = 2-formamido-N(1)-(5-O-phospho-beta-D-ribosyl)acetamidine + L-glutamate + ADP + phosphate + H(+). It functions in the pathway purine metabolism; IMP biosynthesis via de novo pathway; 5-amino-1-(5-phospho-D-ribosyl)imidazole from N(2)-formyl-N(1)-(5-phospho-D-ribosyl)glycinamide: step 1/2. Its function is as follows. Part of the phosphoribosylformylglycinamidine synthase complex involved in the purines biosynthetic pathway. Catalyzes the ATP-dependent conversion of formylglycinamide ribonucleotide (FGAR) and glutamine to yield formylglycinamidine ribonucleotide (FGAM) and glutamate. The FGAM synthase complex is composed of three subunits. PurQ produces an ammonia molecule by converting glutamine to glutamate. PurL transfers the ammonia molecule to FGAR to form FGAM in an ATP-dependent manner. PurS interacts with PurQ and PurL and is thought to assist in the transfer of the ammonia molecule from PurQ to PurL. In Ruegeria sp. (strain TM1040) (Silicibacter sp.), this protein is Phosphoribosylformylglycinamidine synthase subunit PurL.